The following is a 799-amino-acid chain: MSYKVNSSYPDSIPPTEQPYMASQYKQDLQSNIAMATNSEQQRQQQQQQQQQQQQWINQPTAENSDLKEKMNCKNTLNEYIFDFLTKSSLKNTAAAFAQDAHLDRDKGQNPVDGPKSKENNGNQNTFSKVVDTPQGFLYEWWQIFWDIFNTSSSRGGSEFAQQYYQLVLQEQRQEQIYRSLAVHAARLQHDAERRGEYSNEDIDPMHLAAMMLGNPMAPAVQMRNVNMNPIPIPMVGNPIVNNFSIPPYNNANPTTGATAVAPTAPPSGDFTNVGPTQNRSQNVTGWPVYNYPMQPTTENPVGNPCNNNTTNNTTNNKSPVNQPKSLKTMHSTDKPNNVPTSKSTRSRSATSKAKGKVKAGLVAKRRRKNNTATVSAGSTNAGSPNITTPGSTTSEPAMVGSRVNKTPRSDIATNFRNQAIIFGEEDIYSNSKSSPSLDGASPSALASKQPTKVRKNTKKASTSAFPVESTNKLGGNSVVTGKKRSPPNTRVSRRKSTPSVILNADATKDENNMLRTFSNTIAPNIHSAPPTKTANSLPFPGINLGSFNKPAVSSPLSSVTESCFDPESGKIAGKNGPKRAVNSKVSASSPLSIATPRSGDAQKQRSSKVPGNVVIKPPHGFSTTNLNITLKNSKIITSQNNTVSQELPNGGNILEAQVGNDSRSSKGNRNTLSTPEEKKPSSNNQGYDFDALKNSSSLLFPNQAYASNNRTPNENSNVADETSASTNSGDNDNTLIQPSSNVGTTLGPQQTSTNENQNVHSQNLKFGNIGMVEDQGPDYDLNLLDTNENDFNFINWEG.

Residues 1–10 (MSYKVNSSYP) show a composition bias toward polar residues. Disordered stretches follow at residues 1-22 (MSYKVNSSYPDSIPPTEQPYMA), 37-68 (TNSEQQRQQQQQQQQQQQQWINQPTAENSDLK), 101-127 (AHLDRDKGQNPVDGPKSKENNGNQNTF), 255-406 (TTGA…RVNK), 431-501 (NSKS…TPSV), 568-621 (ESGK…PPHG), 644-691 (VSQE…YDFD), and 705-758 (AYAS…NENQ). Low complexity predominate over residues 41–55 (QQRQQQQQQQQQQQQ). Positions 73–105 (CKNTLNEYIFDFLTKSSLKNTAAAFAQDAHLDR) constitute a LisH domain. Polar residues predominate over residues 270–285 (DFTNVGPTQNRSQNVT). A compositionally biased stretch (low complexity) spans 307 to 317 (NNNTTNNTTNN). Residues 318 to 340 (KSPVNQPKSLKTMHSTDKPNNVP) are compositionally biased toward polar residues. Low complexity predominate over residues 341 to 353 (TSKSTRSRSATSK). The segment covering 354–370 (AKGKVKAGLVAKRRRKN) has biased composition (basic residues). Polar residues-rich tracts occupy residues 371-396 (NTATVSAGSTNAGSPNITTPGSTTSE) and 460-480 (KASTSAFPVESTNKLGGNSVV). The segment covering 482 to 497 (GKKRSPPNTRVSRRKS) has biased composition (basic residues). 2 stretches are compositionally biased toward polar residues: residues 584 to 593 (SKVSASSPLS) and 660 to 675 (GNDSRSSKGNRNTLST).

The protein belongs to the FLO8 family.

It is found in the nucleus. Its function is as follows. Required for diploid filamentous growth, haploid invasive growth and flocculation. Putative transcriptional activator of FLO1. In Saccharomyces cerevisiae (strain RM11-1a) (Baker's yeast), this protein is Transcriptional activator FLO8 (FLO8).